We begin with the raw amino-acid sequence, 195 residues long: HTH-type transcriptional regulator BetI (195 aa).

An HTH tetR-type domain is found at 8–68 (SIRRRQLIDA…ATMRDITSQL (61 aa)). A DNA-binding region (H-T-H motif) is located at residues 31–50 (TIAQIARRAGVSTGIISHYF).

Its pathway is amine and polyamine biosynthesis; betaine biosynthesis via choline pathway [regulation]. Functionally, repressor involved in the biosynthesis of the osmoprotectant glycine betaine. It represses transcription of the choline transporter BetT and the genes of BetAB involved in the synthesis of glycine betaine. The polypeptide is HTH-type transcriptional regulator BetI (Escherichia coli O8 (strain IAI1)).